A 214-amino-acid polypeptide reads, in one-letter code: MSGTPDDGDIGLIIAVKRLAAAKTRLAPVFSAQTRENVVLAMLVDTLTAAAGVGSLRSITVITPDEAAAAAAAGLGADVLADPTPEDDPDPLNTAITAAERVVAEGASNIVVLQGDLPALQTQELAEAISAARHHRRSFVADRLGTGTAVLCAFGTALHPRFGPDSSARHRRSGAVELTGAWPGLRCDVDTPADLTAARQLGVGPATARAVAHR.

Phosphoenolpyruvate-binding residues include Thr-148, Gly-163, and Ser-166.

This sequence belongs to the CofC family.

The enzyme catalyses phosphoenolpyruvate + GTP + H(+) = enolpyruvoyl-2-diphospho-5'-guanosine + diphosphate. It participates in cofactor biosynthesis; coenzyme F420 biosynthesis. Functionally, guanylyltransferase that catalyzes the activation of phosphoenolpyruvate (PEP) as enolpyruvoyl-2-diphospho-5'-guanosine, via the condensation of PEP with GTP. It is involved in the biosynthesis of coenzyme F420, a hydride carrier cofactor. This chain is Phosphoenolpyruvate guanylyltransferase, found in Mycobacterium tuberculosis (strain KZN 1435 / MDR).